The following is a 657-amino-acid chain: Sodium/glucose cotransporter 4 (657 aa).

Residues 1–24 (MPASPEPVTATPEPEEVPAKFTLE) lie on the Extracellular side of the membrane. A helical membrane pass occupies residues 25–45 (AADIAVVVVYFVFVLAVGIWS). Residues 46–79 (SIRANRGTVGGYFLAGRSMTWWPIGASLMSSNVG) lie on the Cytoplasmic side of the membrane. Residues 80 to 100 (SGLFIGLAGTGAAGGLAVGGF) form a helical membrane-spanning segment. Topologically, residues 101 to 104 (EWNA) are extracellular. A helical membrane pass occupies residues 105–125 (AWVLIALGWIFVPVYISAGVV). The Cytoplasmic segment spans residues 126–147 (TMPEYLRKRFGGQRIRIYMSVL). Residues 148-168 (SLILYILTKISTDIFSGALFI) traverse the membrane as a helical segment. Over 169–180 (QVSLGWDLYLST) the chain is Extracellular. Residues 181-201 (VILLAVTALYTIAGGLTAVIY) form a helical membrane-spanning segment. Residues 202-207 (TDALQT) lie on the Cytoplasmic side of the membrane. The helical transmembrane segment at 208–228 (VIMVIGAFVLMFIAFDKVGWY) threads the bilayer. Residues 229–265 (EGLLVQYEKAAPALTVPNTTCHLPRSDAFHIFRDPVT) lie on the Extracellular side of the membrane. N246 is a glycosylation site (N-linked (GlcNAc...) asparagine). The helical transmembrane segment at 266–286 (GDIPWPGLIFGLTVLATWVWC) threads the bilayer. Topologically, residues 287 to 307 (TDQVIVQRSLSAKNLSHAKAG) are cytoplasmic. The chain crosses the membrane as a helical span at residues 308–328 (SVLGGYLKVFPMFFVVMPGMI). Residues 329–373 (SRALYPDEVACVDPDECQKICGAKVGCSNIAYPKLVVELMPVGMR) are Extracellular-facing. Residues 374–396 (GLMIAVMMAALMSSLTSIFNSSS) traverse the membrane as a helical segment. The Cytoplasmic portion of the chain corresponds to 397-417 (TLFTMDIWQRIRPRASEKELM). The helical transmembrane segment at 418–438 (VVGRVFILLLVALSIVWIPVI) threads the bilayer. Topologically, residues 439–451 (QTANSGQLFDYIQ) are extracellular. Residues 452–472 (AITSFLSPPITTVFIMAIFWG) form a helical membrane-spanning segment. Topologically, residues 473–478 (RVNEQG) are cytoplasmic. The helical transmembrane segment at 479 to 499 (AFWGLMVGLVVGMVRMIMEFV) threads the bilayer. Residues 500–520 (YGTPSCGETDLRPSLLKDVHY) lie on the Extracellular side of the membrane. Residues 521–541 (LYFALILLALTVLIITAVSLC) form a helical membrane-spanning segment. At 542 to 636 (TAPIPEKHLV…SIEEDHMWKT (95 aa)) the chain is on the cytoplasmic side. Residues 637–657 (VCNVNALILLTANVFLWGYFA) form a helical membrane-spanning segment.

This sequence belongs to the sodium:solute symporter (SSF) (TC 2.A.21) family.

The protein localises to the membrane. Functionally, probable sodium-dependent sugar transporter. This chain is Sodium/glucose cotransporter 4 (slc5a9), found in Danio rerio (Zebrafish).